The chain runs to 66 residues: Panusin (66 aa).

An N-terminal signal peptide occupies residues 1–22; the sequence is MKTKAVLMLMLLVLVAATLVQG. Residues 23–26 constitute a propeptide that is removed on maturation; it reads EPEP. Disulfide bonds link cysteine 32-cysteine 54, cysteine 39-cysteine 61, and cysteine 44-cysteine 60. Residue tyrosine 65 is modified to Tyrosine amide.

As to quaternary structure, forms dimers and higher-order oligomers. In terms of processing, contains 3 disulfide bonds.

Its function is as follows. Antimicrobial peptide. Has antibacterial activity against Gram-positive bacteria S.aureus ATCC 29737 and B.subtilis ATCC 6633 as well as against Gram-negative bacteria E.coli ATCC 10536 and K.pneumoniae ATCC 10031. The chain is Panusin from Panulirus argus (Caribbean spiny lobster).